Consider the following 360-residue polypeptide: Peptide chain release factor 1 (360 aa).

Position 236 is an N5-methylglutamine (Gln-236).

The protein belongs to the prokaryotic/mitochondrial release factor family. Post-translationally, methylated by PrmC. Methylation increases the termination efficiency of RF1.

Its subcellular location is the cytoplasm. Peptide chain release factor 1 directs the termination of translation in response to the peptide chain termination codons UAG and UAA. This chain is Peptide chain release factor 1, found in Ligilactobacillus salivarius (strain UCC118) (Lactobacillus salivarius).